The sequence spans 411 residues: Lycopene beta cyclase (411 aa).

4-32 (ALVIGSGPAGLAIAAELAQRGLKVQGLSP) provides a ligand contact to NAD(+).

It belongs to the lycopene cyclase family. It depends on FAD as a cofactor.

It carries out the reaction a carotenoid psi-end group = a carotenoid beta-end derivative. The catalysed reaction is all-trans-lycopene = gamma-carotene. It catalyses the reaction gamma-carotene = all-trans-beta-carotene. The enzyme catalyses all-trans-neurosporene = beta-zeacarotene. It participates in carotenoid biosynthesis; beta-carotene biosynthesis. The protein operates within carotenoid biosynthesis; beta-zeacarotene biosynthesis. With respect to regulation, inhibited by the bleaching herbicide 2-(4-methylphenoxy)triethylamine hydrochloride (MPTA). Catalyzes the double cyclization reaction which converts lycopene to beta-carotene. It also converts neurosporene to the monocyclic beta-zeacarotene but does not cyclize zeta-carotene. This Synechococcus elongatus (strain ATCC 33912 / PCC 7942 / FACHB-805) (Anacystis nidulans R2) protein is Lycopene beta cyclase.